A 338-amino-acid chain; its full sequence is Increasing suppression factor 1 (338 aa).

Over residues glutamine 50–serine 70 the composition is skewed to low complexity. Positions glutamine 50–asparagine 75 are disordered. Residue serine 119 is modified to Phosphoserine. Low complexity predominate over residues serine 267–asparagine 306. A disordered region spans residues serine 267 to proline 322. Residues glutamate 307 to cysteine 316 show a composition bias toward polar residues.

It belongs to the ISF1/MBR1 family.

Could influence the NAM7/UPF1 function, possibly at the level of mRNA turnover. Participates in mitochondrial biogenesis. This chain is Increasing suppression factor 1 (ISF1), found in Saccharomyces cerevisiae (strain ATCC 204508 / S288c) (Baker's yeast).